Reading from the N-terminus, the 376-residue chain is Cytochrome b (376 aa).

The next 4 helical transmembrane spans lie at 28–48 (YGFLLGIIFFIQILTGVFLAS), 72–94 (WCFRYMHATGASLVFFLTYLHIL), 107–127 (SWISGLIIFALFIVTAFIGYV), and 169–189 (FFVLHFILPFVALCIVFIHIF). 2 residues coordinate heme b: histidine 78 and histidine 92. Heme b contacts are provided by histidine 173 and histidine 187. Histidine 192 serves as a coordination point for a ubiquinone. 4 helical membrane passes run 214–234 (LLSLDVKGFNNILILFLIQSI), 274–294 (IPSKNAGLVIVIASLQLLFLL), 317–337 (VPIIWFMCSFYALLWIGCPLP), and 340–360 (IFILYGRLFIILFFSSGLFSL).

The protein belongs to the cytochrome b family. As to quaternary structure, the main subunits of complex b-c1 are: cytochrome b, cytochrome c1 and the Rieske protein. The cofactor is heme b.

It is found in the mitochondrion inner membrane. Its function is as follows. Component of the ubiquinol-cytochrome c reductase complex (complex III or cytochrome b-c1 complex) that is part of the mitochondrial respiratory chain. The b-c1 complex mediates electron transfer from ubiquinol to cytochrome c. Contributes to the generation of a proton gradient across the mitochondrial membrane that is then used for ATP synthesis. In Plasmodium berghei, this protein is Cytochrome b (MT-CYB).